The chain runs to 123 residues: Small ribosomal subunit protein uS13 (123 aa).

Positions 93-123 are disordered; the sequence is HRKGLPVRGQNTKNNARTRKGPAKAIAGKKK. Positions 108-123 are enriched in basic residues; that stretch reads ARTRKGPAKAIAGKKK.

It belongs to the universal ribosomal protein uS13 family. As to quaternary structure, part of the 30S ribosomal subunit. Forms a loose heterodimer with protein S19. Forms two bridges to the 50S subunit in the 70S ribosome.

Functionally, located at the top of the head of the 30S subunit, it contacts several helices of the 16S rRNA. In the 70S ribosome it contacts the 23S rRNA (bridge B1a) and protein L5 of the 50S subunit (bridge B1b), connecting the 2 subunits; these bridges are implicated in subunit movement. Contacts the tRNAs in the A and P-sites. This Leuconostoc mesenteroides subsp. mesenteroides (strain ATCC 8293 / DSM 20343 / BCRC 11652 / CCM 1803 / JCM 6124 / NCDO 523 / NBRC 100496 / NCIMB 8023 / NCTC 12954 / NRRL B-1118 / 37Y) protein is Small ribosomal subunit protein uS13.